The chain runs to 213 residues: MELHVLNHPLVEHKLTVLRDKNTPSSIFRELVSELVMLEAYEATRNLSVVAAPIETPVAPMTGKKLAEPRPIIVPVLRAGLGMLDGMTRLMPTAEVGFLGMKRDEEHPTQQVTYANRLPEDLSGRQCFLIDPMLATGGTLVAATHYLAERGAKDVTAINIIAAPEGIKYVEEHIDPSIEFKVVVCAVDEKLNDKCYIVPGLGDAGDRLYGVID.

5-phospho-alpha-D-ribose 1-diphosphate-binding positions include arginine 78, arginine 103, and 131 to 139 (DPMLATGGT). Uracil is bound by residues isoleucine 197 and 202-204 (GDA). Residue aspartate 203 coordinates 5-phospho-alpha-D-ribose 1-diphosphate.

The protein belongs to the UPRTase family. Mg(2+) is required as a cofactor.

It catalyses the reaction UMP + diphosphate = 5-phospho-alpha-D-ribose 1-diphosphate + uracil. It participates in pyrimidine metabolism; UMP biosynthesis via salvage pathway; UMP from uracil: step 1/1. Allosterically activated by GTP. Its function is as follows. Catalyzes the conversion of uracil and 5-phospho-alpha-D-ribose 1-diphosphate (PRPP) to UMP and diphosphate. This chain is Uracil phosphoribosyltransferase, found in Bifidobacterium longum subsp. infantis (strain ATCC 15697 / DSM 20088 / JCM 1222 / NCTC 11817 / S12).